The sequence spans 637 residues: Biosynthetic arginine decarboxylase (637 aa).

The residue at position 101 (lysine 101) is an N6-(pyridoxal phosphate)lysine. 286-296 (VDIGGGLGVDY) is a substrate binding site.

The protein belongs to the Orn/Lys/Arg decarboxylase class-II family. SpeA subfamily. It depends on Mg(2+) as a cofactor. Requires pyridoxal 5'-phosphate as cofactor.

It catalyses the reaction L-arginine + H(+) = agmatine + CO2. It participates in amine and polyamine biosynthesis; agmatine biosynthesis; agmatine from L-arginine: step 1/1. Catalyzes the biosynthesis of agmatine from arginine. The chain is Biosynthetic arginine decarboxylase from Marinobacter nauticus (strain ATCC 700491 / DSM 11845 / VT8) (Marinobacter aquaeolei).